A 146-amino-acid chain; its full sequence is Hemoglobin subunit beta (146 aa).

The residue at position 1 (Val1) is an N-acetylvaline. Positions 2 to 146 (QLSGEEKAAV…VANALAHKYH (145 aa)) constitute a Globin domain. Ser44 carries the phosphoserine modification. N6-acetyllysine is present on Lys59. His63 serves as a coordination point for heme b. An N6-acetyllysine modification is found at Lys82. Position 92 (His92) interacts with heme b. Cys93 is subject to S-nitrosocysteine. Lys144 carries the post-translational modification N6-acetyllysine.

The protein belongs to the globin family. Heterotetramer of two alpha chains and two beta chains. Red blood cells.

Its function is as follows. Involved in oxygen transport from the lung to the various peripheral tissues. The polypeptide is Hemoglobin subunit beta (HBB) (Equus hemionus kulan (Turkmenian kulan)).